An 877-amino-acid polypeptide reads, in one-letter code: Alanine--tRNA ligase (877 aa).

Positions 556, 560, 657, and 661 each coordinate Zn(2+).

This sequence belongs to the class-II aminoacyl-tRNA synthetase family. Requires Zn(2+) as cofactor.

The protein localises to the cytoplasm. It carries out the reaction tRNA(Ala) + L-alanine + ATP = L-alanyl-tRNA(Ala) + AMP + diphosphate. Its function is as follows. Catalyzes the attachment of alanine to tRNA(Ala) in a two-step reaction: alanine is first activated by ATP to form Ala-AMP and then transferred to the acceptor end of tRNA(Ala). Also edits incorrectly charged Ser-tRNA(Ala) and Gly-tRNA(Ala) via its editing domain. The sequence is that of Alanine--tRNA ligase from Wolbachia pipientis wMel.